The sequence spans 208 residues: N-(5'-phosphoribosyl)anthranilate isomerase (208 aa).

It belongs to the TrpF family.

It carries out the reaction N-(5-phospho-beta-D-ribosyl)anthranilate = 1-(2-carboxyphenylamino)-1-deoxy-D-ribulose 5-phosphate. It functions in the pathway amino-acid biosynthesis; L-tryptophan biosynthesis; L-tryptophan from chorismate: step 3/5. The sequence is that of N-(5'-phosphoribosyl)anthranilate isomerase from Chlamydia trachomatis serovar L2 (strain ATCC VR-902B / DSM 19102 / 434/Bu).